Reading from the N-terminus, the 356-residue chain is UDP-N-acetylglucosamine--N-acetylmuramyl-(pentapeptide) pyrophosphoryl-undecaprenol N-acetylglucosamine transferase (356 aa).

Residues Thr-12 to Gly-14, Asn-124, Arg-163, Ser-188, Ile-242, and Gln-287 contribute to the UDP-N-acetyl-alpha-D-glucosamine site.

This sequence belongs to the glycosyltransferase 28 family. MurG subfamily.

The protein resides in the cell inner membrane. The catalysed reaction is di-trans,octa-cis-undecaprenyl diphospho-N-acetyl-alpha-D-muramoyl-L-alanyl-D-glutamyl-meso-2,6-diaminopimeloyl-D-alanyl-D-alanine + UDP-N-acetyl-alpha-D-glucosamine = di-trans,octa-cis-undecaprenyl diphospho-[N-acetyl-alpha-D-glucosaminyl-(1-&gt;4)]-N-acetyl-alpha-D-muramoyl-L-alanyl-D-glutamyl-meso-2,6-diaminopimeloyl-D-alanyl-D-alanine + UDP + H(+). It functions in the pathway cell wall biogenesis; peptidoglycan biosynthesis. Functionally, cell wall formation. Catalyzes the transfer of a GlcNAc subunit on undecaprenyl-pyrophosphoryl-MurNAc-pentapeptide (lipid intermediate I) to form undecaprenyl-pyrophosphoryl-MurNAc-(pentapeptide)GlcNAc (lipid intermediate II). The polypeptide is UDP-N-acetylglucosamine--N-acetylmuramyl-(pentapeptide) pyrophosphoryl-undecaprenol N-acetylglucosamine transferase (Pseudomonas syringae pv. tomato (strain ATCC BAA-871 / DC3000)).